The primary structure comprises 257 residues: Zinc transporter ZupT (257 aa).

A run of 8 helical transmembrane segments spans residues 5 to 25, 32 to 52, 61 to 81, 109 to 129, 137 to 157, 171 to 191, 195 to 215, and 236 to 256; these read LILT…GVLG, LLAF…LMEM, GMSP…YLGL, AILL…ATFV, LGFG…LAVV, ILWA…AWLI, MISP…MVAL, and GVLC…TAGI. Positions 120 and 123 each coordinate Fe(2+). Residues E123 and H148 each contribute to the Zn(2+) site. Fe(2+) is bound by residues N149, E152, and E181. E152 serves as a coordination point for Zn(2+).

This sequence belongs to the ZIP transporter (TC 2.A.5) family. ZupT subfamily.

It localises to the cell inner membrane. It catalyses the reaction Zn(2+)(in) = Zn(2+)(out). Its function is as follows. Mediates zinc uptake. May also transport other divalent cations. In Shigella dysenteriae serotype 1 (strain Sd197), this protein is Zinc transporter ZupT.